The chain runs to 623 residues: V-type proton ATPase catalytic subunit A (623 aa).

252 to 259 (GAFGCGKT) is a binding site for ATP.

Belongs to the ATPase alpha/beta chains family. V-ATPase is a heteromultimeric enzyme composed of a peripheral catalytic V1 complex (main components: subunits A, B, C, D, E, and F) attached to an integral membrane V0 proton pore complex (main component: the proteolipid protein).

It catalyses the reaction ATP + H2O + 4 H(+)(in) = ADP + phosphate + 5 H(+)(out). Catalytic subunit of the peripheral V1 complex of vacuolar ATPase. V-ATPase vacuolar ATPase is responsible for acidifying a variety of intracellular compartments in eukaryotic cells. The chain is V-type proton ATPase catalytic subunit A from Beta vulgaris (Sugar beet).